Consider the following 338-residue polypeptide: Lipoate-protein ligase A (338 aa).

Residues 29-216 (PATQRVLFLW…AFFAHYGERV (188 aa)) enclose the BPL/LPL catalytic domain. Residues R71, 76–79 (GAVF), and K134 contribute to the ATP site. K134 serves as a coordination point for (R)-lipoate.

This sequence belongs to the LplA family. As to quaternary structure, monomer.

It is found in the cytoplasm. The catalysed reaction is L-lysyl-[lipoyl-carrier protein] + (R)-lipoate + ATP = N(6)-[(R)-lipoyl]-L-lysyl-[lipoyl-carrier protein] + AMP + diphosphate + H(+). The protein operates within protein modification; protein lipoylation via exogenous pathway; protein N(6)-(lipoyl)lysine from lipoate: step 1/2. It participates in protein modification; protein lipoylation via exogenous pathway; protein N(6)-(lipoyl)lysine from lipoate: step 2/2. Functionally, catalyzes both the ATP-dependent activation of exogenously supplied lipoate to lipoyl-AMP and the transfer of the activated lipoyl onto the lipoyl domains of lipoate-dependent enzymes. In Salmonella schwarzengrund (strain CVM19633), this protein is Lipoate-protein ligase A.